A 344-amino-acid chain; its full sequence is Follistatin (344 aa).

The first 29 residues, 1–29 (MVCARHQPGGLCLLLLLLCQFMEDRSAQA), serve as a signal peptide directing secretion. The 74-residue stretch at 30–103 (GNCWLRQAKN…TCENVDCGPG (74 aa)) folds into the TB domain. Cystine bridges form between Cys-32–Cys-55, Cys-42–Cys-88, Cys-56–Cys-91, Cys-95–Cys-106, Cys-100–Cys-116, Cys-118–Cys-150, Cys-122–Cys-143, Cys-132–Cys-164, Cys-168–Cys-179, Cys-173–Cys-189, Cys-192–Cys-225, Cys-196–Cys-218, Cys-207–Cys-239, Cys-245–Cys-256, Cys-250–Cys-267, Cys-270–Cys-302, Cys-274–Cys-295, and Cys-284–Cys-316. Positions 94–117 (TCENVDCGPGKKCRMNKKNKPRCV) constitute a Follistatin-like 1 domain. The region spanning 112–166 (NKPRCVCAPDCSNITWKGPVCGLDGKTYRNECALLKARCKEQPELEVQYQGKCKK) is the Kazal-like 1 domain. Asn-124 carries N-linked (GlcNAc...) asparagine glycosylation. The 24-residue stretch at 167-190 (TCRDVFCPGSSTCVVDQTNNAYCV) folds into the Follistatin-like 2 domain. A Kazal-like 2 domain is found at 186–241 (NAYCVTCNRICPEPSSSEQSLCGNDGVTYSSACHLRKATCLLGRSIGLAYEGKCIK). Residues 244–268 (SCEDIQCGGGKKCLWDFKVGRGRCS) enclose the Follistatin-like 3 domain. The region spanning 264-318 (RGRCSLCDELCPDSKSDEPVCASDNATYASECAMKEAACSSGVLLEVKHSGSCNS) is the Kazal-like 3 domain. Asn-288 carries N-linked (GlcNAc...) asparagine glycosylation. Residues 315-344 (SCNSISEETEEEEEEEDQDYSFPISSTLEW) form a disordered region. Residues 321–333 (EETEEEEEEEDQD) show a composition bias toward acidic residues.

Interacts with GDF11. Interacts with activin A/INHBA. Interacts with myostatin/MSTN.

Its subcellular location is the secreted. It localises to the nucleus. It is found in the nucleolus. Its function is as follows. Multifunctional regulatory protein whose primary function is to antagonize members of the transforming growth factor beta (TGF-beta) superfamily including activin, myostatin, GDF11 or bone morphogenetic proteins (BMPs). Mechanistically, binds to these ligands in the extracellular space, blocking their type II receptor-binding site to inhibit downstream signaling. Plays an essential role in muscle fiber formation and growth both by preventing the repressive effects of myostatin and through SMAD3/AKT/mTOR signaling independently of myostatin. Also promotes neural differentiation by antagonizing the action BMP4. Acts as a specific inhibitor of the biosynthesis and secretion of pituitary follicle stimulating hormone (FSH) by sequestering activin A/INHBA. On the other hand, translocates into the nucleus where it down-regulates rRNA synthesis and ribosome biogenesis to maintain cellular energy homeostasis by binding to rDNA. The sequence is that of Follistatin from Rattus norvegicus (Rat).